We begin with the raw amino-acid sequence, 738 residues long: MEHTYQYAWVIPLLPLPVIMSMGFGLFLIPTATKNLRRIWAFPSILLLSIAMVFSLHLSIQQINGSSIYQYLWSWTINNDFSLEFGYLVDPLTSIMLILITTVGILVLIYSDDYMSHDEGYLRFFVYISFFNTSMLGLVTSSNLIQIYFFWELVGMCSYLLIGFWFTRPIAASACQKAFVTNRVGDFGLLLGILGFFWITGSLEFRDLFKIANNWIPNNGINSLLTTLCAFLLFLGAVAKSAQFPLHVWLPDAMEGPTPISALIHAATMVAAGIFLLARLLPLFISLPLLMSFISLVGTITLFLGATLALAQRDIKRSLAYSTMSQLGYMMLALGIGSYQAALFHLITHAYSKALLFLGSGSVIHSMEPLVGYSPDKSQNMVLMGGLRKYVPITRTTFLCGTLSLCGIPPLACFWSKDEILSNSWLYSPFFGIIASFTAGLTAFYMFRIYLLTFDGYLRVHFQNYSSTKEGSLYSISLWGKSISKGVNRDFVLSTMKSGVSFFSQNIPKIPANTRNKIGSFSTPFGAKKTFVYPHETGNTMLFPLLILLLFTLFIGSIGIPFDNGVKDNRILELTILSKWLTPSINLFQENSNSSINSYEFLTNAISSVSLAIFGLFIAYIFYGSAYSFFQNLNFQNSLVKKNPKKSFLDEVKKKIYSWSYNRGYIDFFYTRVFILGIRRLAELTHFFDKGVIDGIINGVGLAGFCIGEEIKYVGGGRISSYLFFFLCYVSLFLFFIP.

The next 17 membrane-spanning stretches (helical) occupy residues 9–29 (WVIPLLPLPVIMSMGFGLFLI), 39–59 (IWAFPSILLLSIAMVFSLHLS), 89–109 (VDPLTSIMLILITTVGILVLI), 125–145 (FVYISFFNTSMLGLVTSSNLI), 147–167 (IYFFWELVGMCSYLLIGFWFT), 185–205 (GDFGLLLGILGFFWITGSLEF), 219–239 (NGINSLLTTLCAFLLFLGAVA), 258–278 (TPISALIHAATMVAAGIFLLA), 280–300 (LLPLFISLPLLMSFISLVGTI), 327–347 (LGYMMLALGIGSYQAALFHLI), 354–374 (ALLFLGSGSVIHSMEPLVGYS), 396–416 (TTFLCGTLSLCGIPPLACFWS), 425–445 (WLYSPFFGIIASFTAGLTAFY), 542–562 (LFPLLILLLFTLFIGSIGIPF), 610–630 (SLAIFGLFIAYIFYGSAYSFF), 691–711 (GVIDGIINGVGLAGFCIGEEI), and 717–737 (GRISSYLFFFLCYVSLFLFFI).

The protein belongs to the complex I subunit 5 family. As to quaternary structure, NDH is composed of at least 16 different subunits, 5 of which are encoded in the nucleus.

Its subcellular location is the plastid. It localises to the chloroplast thylakoid membrane. The enzyme catalyses a plastoquinone + NADH + (n+1) H(+)(in) = a plastoquinol + NAD(+) + n H(+)(out). It carries out the reaction a plastoquinone + NADPH + (n+1) H(+)(in) = a plastoquinol + NADP(+) + n H(+)(out). Its function is as follows. NDH shuttles electrons from NAD(P)H:plastoquinone, via FMN and iron-sulfur (Fe-S) centers, to quinones in the photosynthetic chain and possibly in a chloroplast respiratory chain. The immediate electron acceptor for the enzyme in this species is believed to be plastoquinone. Couples the redox reaction to proton translocation, and thus conserves the redox energy in a proton gradient. The chain is NAD(P)H-quinone oxidoreductase subunit 5, chloroplastic (ndhF) from Saccharum officinarum (Sugarcane).